A 110-amino-acid chain; its full sequence is UPF0060 membrane protein Swit_0423 (110 aa).

The next 4 membrane-spanning stretches (helical) occupy residues 6–26 (LFIF…FWAW), 29–49 (LGKS…FAWL), 61–81 (AFAA…WAVE), and 90–110 (LIGV…PRTA).

This sequence belongs to the UPF0060 family.

It localises to the cell inner membrane. The polypeptide is UPF0060 membrane protein Swit_0423 (Rhizorhabdus wittichii (strain DSM 6014 / CCUG 31198 / JCM 15750 / NBRC 105917 / EY 4224 / RW1) (Sphingomonas wittichii)).